The chain runs to 163 residues: HTH-type transcriptional regulator IscR (163 aa).

The 130-residue stretch at 2 to 131 (RLTSKGRYAV…NNITLGELVN (130 aa)) folds into the HTH rrf2-type domain. The segment at residues 28–51 (LADISERQGISLSYLEQLFSRLRK) is a DNA-binding region (H-T-H motif). [2Fe-2S] cluster-binding residues include Cys92, Cys98, and Cys104. Over residues 140-149 (DRQHTHDAPR) the composition is skewed to basic and acidic residues. The segment at 140-163 (DRQHTHDAPRSTRTQDAIDVKLRA) is disordered.

[2Fe-2S] cluster is required as a cofactor.

Regulates the transcription of several operons and genes involved in the biogenesis of Fe-S clusters and Fe-S-containing proteins. The chain is HTH-type transcriptional regulator IscR from Citrobacter koseri (strain ATCC BAA-895 / CDC 4225-83 / SGSC4696).